We begin with the raw amino-acid sequence, 505 residues long: Ent-kaurene oxidase 2 (505 aa).

A helical transmembrane segment spans residues 3–23; it reads AFVPGGAGAAAAAVGGFVAAA. Cys449 is a binding site for heme.

It belongs to the cytochrome P450 family. The cofactor is heme. In terms of tissue distribution, widely expressed.

The protein localises to the membrane. The enzyme catalyses ent-kaur-16-ene + 3 reduced [NADPH--hemoprotein reductase] + 3 O2 = ent-kaur-16-en-19-oate + 3 oxidized [NADPH--hemoprotein reductase] + 4 H2O + 4 H(+). The protein operates within plant hormone biosynthesis; gibberellin biosynthesis. Catalyzes three successive oxidations of the 4-methyl group of ent-kaurene giving kaurenoic acid, a key step in gibberellins (GAs) biosynthesis. GAs, which are involved many processes, including stem elongation, play a central role in plant development. The polypeptide is Ent-kaurene oxidase 2 (Oryza sativa subsp. japonica (Rice)).